The chain runs to 556 residues: Potassium-transporting ATPase potassium-binding subunit (556 aa).

A run of 10 helical transmembrane segments spans residues 6–26, 65–85, 133–153, 176–196, 249–269, 283–303, 378–398, 415–435, 483–503, and 526–546; these read AGIA…VPLG, SVLA…LVQG, GLAV…IALV, LRIL…GGAI, PTPW…FSLP, VAIA…TMLL, GLYG…LMVG, LAAS…AIAM, ALGL…LALA, and FVGM…LPIL.

Belongs to the KdpA family. The system is composed of three essential subunits: KdpA, KdpB and KdpC.

It localises to the cell membrane. Part of the high-affinity ATP-driven potassium transport (or Kdp) system, which catalyzes the hydrolysis of ATP coupled with the electrogenic transport of potassium into the cytoplasm. This subunit binds the extracellular potassium ions and delivers the ions to the membrane domain of KdpB through an intramembrane tunnel. The chain is Potassium-transporting ATPase potassium-binding subunit from Mycolicibacterium smegmatis (strain ATCC 700084 / mc(2)155) (Mycobacterium smegmatis).